A 195-amino-acid chain; its full sequence is Probable nicotinate-nucleotide adenylyltransferase (195 aa).

Belongs to the NadD family.

It carries out the reaction nicotinate beta-D-ribonucleotide + ATP + H(+) = deamido-NAD(+) + diphosphate. It participates in cofactor biosynthesis; NAD(+) biosynthesis; deamido-NAD(+) from nicotinate D-ribonucleotide: step 1/1. Functionally, catalyzes the reversible adenylation of nicotinate mononucleotide (NaMN) to nicotinic acid adenine dinucleotide (NaAD). The chain is Probable nicotinate-nucleotide adenylyltransferase from Chlorobaculum parvum (strain DSM 263 / NCIMB 8327) (Chlorobium vibrioforme subsp. thiosulfatophilum).